Here is a 91-residue protein sequence, read N- to C-terminus: Small ribosomal subunit protein uS15 (91 aa).

The protein belongs to the universal ribosomal protein uS15 family. As to quaternary structure, part of the 30S ribosomal subunit. Forms a bridge to the 50S subunit in the 70S ribosome, contacting the 23S rRNA.

One of the primary rRNA binding proteins, it binds directly to 16S rRNA where it helps nucleate assembly of the platform of the 30S subunit by binding and bridging several RNA helices of the 16S rRNA. Its function is as follows. Forms an intersubunit bridge (bridge B4) with the 23S rRNA of the 50S subunit in the ribosome. This chain is Small ribosomal subunit protein uS15, found in Rickettsia felis (strain ATCC VR-1525 / URRWXCal2) (Rickettsia azadi).